Reading from the N-terminus, the 255-residue chain is Syntaxin-6 (255 aa).

S2 carries the post-translational modification N-acetylserine. S2 bears the Phosphoserine mark. The interval 2 to 168 is required for interaction with VPS51; that stretch reads SMEDPFFVVK…QAQQQLIVEQ (167 aa). Topologically, residues 2 to 234 are cytoplasmic; the sequence is SMEDPFFVVK…VSHMTSDRRQ (233 aa). A coiled-coil region spans residues 41-74; sequence EEIDWTTNELRNNLRSIEWDLEDLDETISIVEAN. S129 and S152 each carry phosphoserine. Positions 163–225 constitute a t-SNARE coiled-coil homology domain; it reads QLIVEQQDEQ…DNVMKKLAKV (63 aa). Residues 235-255 traverse the membrane as a helical; Anchor for type IV membrane protein segment; that stretch reads WCAIAILFAVLLVVLILFLVL.

This sequence belongs to the syntaxin family. Identified in a complex containing STX6, STX12, VAMP4 and VTI1A. Binds EEA1. Interacts with VPS45A. Interacts with MARCHF2; the interaction promotes MARCHF2-mediated ubiquitination and degradation of CFTR. Interacts with MARCHF3. Interacts with GOPC. Interacts with BLTP3B (via C-terminal coiled-coil domain). Interacts with BAIAP3; this interaction is increased in the presence of calcium. Interacts with VPS13B.

The protein resides in the golgi apparatus membrane. The protein localises to the golgi apparatus. It is found in the trans-Golgi network membrane. It localises to the recycling endosome membrane. SNARE promoting movement of transport vesicles to target membranes. Targets endosomes to the trans-Golgi network, and may therefore function in retrograde trafficking. Together with SNARE STX12, promotes movement of vesicles from endosomes to the cell membrane, and may therefore function in the endocytic recycling pathway. The chain is Syntaxin-6 (STX6) from Homo sapiens (Human).